The sequence spans 295 residues: MGVKGLLFSIVLINLSLLGLCGYPRKPVDVPFWKNYEPSWASHHIKYLSGGSTVDLVLDRSSGAGFQSKKSYLFGHFSMKLKLVGGDSAGVVTAFYLSSNNAEHDEIDFEFLGNRTGQPYILQTNVFTGGKGDREQRIYLWFDPTKGYHSYSVLWNTFQIVIFVDDVPIRAFKNSKDLGVKFPFNQPMKIYSSLWDADDWATRGGLEKTDWSNAPFTASYTSFHVDGCEAATPQEVQVCNTKGMRWWDQKAFQDLDALQYRRLRWVRQKYTIYNYCTDRKRYPTLPPECTKDRDI.

The first 21 residues, 1–21, serve as a signal peptide directing secretion; that stretch reads MGVKGLLFSIVLINLSLLGLC. A GH16 domain is found at 22-220; sequence GYPRKPVDVP…WSNAPFTASY (199 aa). The active-site Nucleophile is the glutamate 106. Catalysis depends on glutamate 110, which acts as the Proton donor. Glutamate 110 provides a ligand contact to xyloglucan. Asparagine 114 is a glycosylation site (N-linked (GlcNAc...) asparagine). Residues 123–125, 133–135, 199–200, and glycine 204 contribute to the xyloglucan site; these read QTN, DRE, and DW. Intrachain disulfides connect cysteine 228-cysteine 239 and cysteine 276-cysteine 289. Arginine 281 lines the xyloglucan pocket.

The protein belongs to the glycosyl hydrolase 16 family. XTH group 1 subfamily. In terms of processing, contains at least one intrachain disulfide bond essential for its enzymatic activity.

The protein localises to the secreted. It is found in the cell wall. The protein resides in the extracellular space. Its subcellular location is the apoplast. The enzyme catalyses breaks a beta-(1-&gt;4) bond in the backbone of a xyloglucan and transfers the xyloglucanyl segment on to O-4 of the non-reducing terminal glucose residue of an acceptor, which can be a xyloglucan or an oligosaccharide of xyloglucan.. Functionally, catalyzes xyloglucan endohydrolysis (XEH) and/or endotransglycosylation (XET). Cleaves and religates xyloglucan polymers, an essential constituent of the primary cell wall, and thereby participates in cell wall construction of growing tissues. This Nicotiana tabacum (Common tobacco) protein is Probable xyloglucan endotransglucosylase/hydrolase protein (XTH).